Reading from the N-terminus, the 132-residue chain is MDVTRLLLATLLVFLCFFTAYSHPPPEEKLRDDRSLRSNSSVNLLDFPSVSIVALNKNSKQISRKEAEKKRSSKKEASMKKVARPRTPLSAPCVATRDSCKPPAPACCDPCAFCQCRFFRSACSCRVLSLNC.

The signal sequence occupies residues 1-22; that stretch reads MDVTRLLLATLLVFLCFFTAYS. An N-linked (GlcNAc...) asparagine glycan is attached at Asn39. Positions 61 to 87 are disordered; it reads QISRKEAEKKRSSKKEASMKKVARPRT. A compositionally biased stretch (basic and acidic residues) spans 63-79; it reads SRKEAEKKRSSKKEASM. Cystine bridges form between Cys93-Cys108, Cys100-Cys114, Cys107-Cys125, Cys111-Cys132, and Cys116-Cys123. The Agouti domain occupies 93–132; the sequence is CVATRDSCKPPAPACCDPCAFCQCRFFRSACSCRVLSLNC.

It localises to the secreted. In terms of biological role, involved in the regulation of melanogenesis. The binding of ASP to MC1R precludes alpha-MSH initiated signaling and thus blocks production of cAMP, leading to a down-regulation of eumelanogenesis (brown/black pigment) and thus increasing synthesis of pheomelanin (yellow/red pigment). The polypeptide is Agouti-signaling protein (ASIP) (Macaca hecki (Heck's macaque)).